The sequence spans 442 residues: Protein PRRC1-B (442 aa).

The disordered stretch occupies residues 1 to 24; sequence MMEESGIETTPPSTPPPSTIGTSV.

The protein belongs to the PRRC1 family.

The protein resides in the golgi apparatus. This Xenopus laevis (African clawed frog) protein is Protein PRRC1-B (prrc1-b).